A 688-amino-acid chain; its full sequence is Glycine--tRNA ligase beta subunit (688 aa).

It belongs to the class-II aminoacyl-tRNA synthetase family. Tetramer of two alpha and two beta subunits.

It localises to the cytoplasm. The catalysed reaction is tRNA(Gly) + glycine + ATP = glycyl-tRNA(Gly) + AMP + diphosphate. The polypeptide is Glycine--tRNA ligase beta subunit (Desulforudis audaxviator (strain MP104C)).